The sequence spans 379 residues: Cytochrome b (379 aa).

The next 4 helical transmembrane spans lie at 33 to 53 (FGSL…FLAM), 77 to 98 (WTIR…FIHV), 113 to 133 (WNVG…GYVL), and 178 to 198 (FFAL…IHLL). Heme b-binding residues include H83 and H97. Heme b contacts are provided by H182 and H196. An a ubiquinone-binding site is contributed by H201. 4 helical membrane passes run 226–246 (TKDF…ALFY), 288–308 (LGGV…PFLQ), 320–340 (LSQF…WIGG), and 347–367 (FINI…FIMP).

It belongs to the cytochrome b family. As to quaternary structure, the cytochrome bc1 complex contains 11 subunits: 3 respiratory subunits (MT-CYB, CYC1 and UQCRFS1), 2 core proteins (UQCRC1 and UQCRC2) and 6 low-molecular weight proteins (UQCRH/QCR6, UQCRB/QCR7, UQCRQ/QCR8, UQCR10/QCR9, UQCR11/QCR10 and a cleavage product of UQCRFS1). This cytochrome bc1 complex then forms a dimer. Requires heme b as cofactor.

The protein localises to the mitochondrion inner membrane. Component of the ubiquinol-cytochrome c reductase complex (complex III or cytochrome b-c1 complex) that is part of the mitochondrial respiratory chain. The b-c1 complex mediates electron transfer from ubiquinol to cytochrome c. Contributes to the generation of a proton gradient across the mitochondrial membrane that is then used for ATP synthesis. The chain is Cytochrome b (MT-CYB) from Lepilemur sahamalazensis (Sahamalaza sportive lemur).